The sequence spans 151 residues: MARINYSVKEDPETTSKAMGSELHISPKKSREVCCKIKGMKVPEARKFLEDVIALKQAVPFKRHHDGSGHRKGPMAAGRYPVSASKEILKILRNAESNAEYKGLEPANMYITHAAIQRGRVIRGFMPRARGRATPKDTETVNIEMILSEVR.

Positions 1–25 are disordered; sequence MARINYSVKEDPETTSKAMGSELHI.

This sequence belongs to the universal ribosomal protein uL22 family. In terms of assembly, part of the 50S ribosomal subunit.

Functionally, this protein binds specifically to 23S rRNA. It makes multiple contacts with different domains of the 23S rRNA in the assembled 50S subunit and ribosome. Its function is as follows. The globular domain of the protein is located near the polypeptide exit tunnel on the outside of the subunit, while an extended beta-hairpin is found that lines the wall of the exit tunnel in the center of the 70S ribosome. This is Large ribosomal subunit protein uL22 from Methanosarcina barkeri (strain Fusaro / DSM 804).